We begin with the raw amino-acid sequence, 353 residues long: MTAILERRESTSLWGRFCNWITSTENRLYIGWFGVLMIPTLLTATSVFIIAFIAAPPVDIDGIREPVSGSLLYGNNIISGAIIPTSAAIGLHFYPIWEAASVDEWLYNGGPYELIVLHFLLGVACYMGREWELSFRLGMRPWIAVAYSAPVAAATAVFLIYPIGQGSFSDGMPLGISGTFNFMIVFQAEHNILMHPFHMLGVAGVFGGSLFSAMHGSLVTSSLIRETTENESANEGYKFGQEEETYNIVAAHGYFGRLIFQYASFNNSRSLHFFLAAWPVVGIWFTALGISTMAFNLNGFNFNQSVVDSQGRVINTWADIINRANLGMEVMHERNAHNFPLDLAALEVPYLNG.

Residue Thr-2 is modified to N-acetylthreonine. Position 2 is a phosphothreonine (Thr-2). 3 helical membrane-spanning segments follow: residues Tyr-29–Ser-46, His-118–Leu-133, and Trp-142–Ala-156. His-118 is a chlorophyll a binding site. Tyr-126 lines the pheophytin a pocket. [CaMn4O5] cluster-binding residues include Asp-170 and Glu-189. A helical membrane pass occupies residues Phe-197–Leu-218. His-198 serves as a coordination point for chlorophyll a. A quinone contacts are provided by residues His-215 and Ser-264–Phe-265. Residue His-215 participates in Fe cation binding. Position 272 (His-272) interacts with Fe cation. The helical transmembrane segment at Phe-274–Leu-288 threads the bilayer. The [CaMn4O5] cluster site is built by His-332, Glu-333, Asp-342, and Ala-344. A propeptide spanning residues Ala-345 to Gly-353 is cleaved from the precursor.

Belongs to the reaction center PufL/M/PsbA/D family. PSII is composed of 1 copy each of membrane proteins PsbA, PsbB, PsbC, PsbD, PsbE, PsbF, PsbH, PsbI, PsbJ, PsbK, PsbL, PsbM, PsbT, PsbX, PsbY, PsbZ, Psb30/Ycf12, at least 3 peripheral proteins of the oxygen-evolving complex and a large number of cofactors. It forms dimeric complexes. The D1/D2 heterodimer binds P680, chlorophylls that are the primary electron donor of PSII, and subsequent electron acceptors. It shares a non-heme iron and each subunit binds pheophytin, quinone, additional chlorophylls, carotenoids and lipids. D1 provides most of the ligands for the Mn4-Ca-O5 cluster of the oxygen-evolving complex (OEC). There is also a Cl(-1) ion associated with D1 and D2, which is required for oxygen evolution. The PSII complex binds additional chlorophylls, carotenoids and specific lipids. serves as cofactor. In terms of processing, phosphorylated in both bundle sheath and mesophyll cells, phosphorylation increases when cells are grown under high rather than low light regimes (70 vs 900 umol photons/m-2/s). PSII is subject to light-induced damage, in particular to D1. Damaged protein is degraded by Deg1 and FtsH proteases and replaced. In maize mesophyll cells D1 degradation is less extensive in grana (stacked) vs stroma (unstacked) lamellae, in part due to exclusion of FtsH from the grana. D1 degradation is faster in bundle sheath cells. Post-translationally, tyr-161 forms a radical intermediate that is referred to as redox-active TyrZ, YZ or Y-Z. In terms of processing, C-terminally processed by CTPA; processing is essential to allow assembly of the oxygen-evolving complex and thus photosynthetic growth.

It localises to the plastid. Its subcellular location is the chloroplast thylakoid membrane. It catalyses the reaction 2 a plastoquinone + 4 hnu + 2 H2O = 2 a plastoquinol + O2. Its function is as follows. Photosystem II (PSII) is a light-driven water:plastoquinone oxidoreductase that uses light energy to abstract electrons from H(2)O, generating O(2) and a proton gradient subsequently used for ATP formation. It consists of a core antenna complex that captures photons, and an electron transfer chain that converts photonic excitation into a charge separation. The D1/D2 (PsbA/PsbD) reaction center heterodimer binds P680, the primary electron donor of PSII as well as several subsequent electron acceptors. This Zea mays (Maize) protein is Photosystem II protein D1.